The chain runs to 71 residues: Translation initiation factor IF-1 (71 aa).

The S1-like domain maps to 1-71 (MANDVIEIEG…TKGRITYRFR (71 aa)).

It belongs to the IF-1 family. As to quaternary structure, component of the 30S ribosomal translation pre-initiation complex which assembles on the 30S ribosome in the order IF-2 and IF-3, IF-1 and N-formylmethionyl-tRNA(fMet); mRNA recruitment can occur at any time during PIC assembly.

Its subcellular location is the cytoplasm. Its function is as follows. One of the essential components for the initiation of protein synthesis. Stabilizes the binding of IF-2 and IF-3 on the 30S subunit to which N-formylmethionyl-tRNA(fMet) subsequently binds. Helps modulate mRNA selection, yielding the 30S pre-initiation complex (PIC). Upon addition of the 50S ribosomal subunit IF-1, IF-2 and IF-3 are released leaving the mature 70S translation initiation complex. This is Translation initiation factor IF-1 from Leuconostoc mesenteroides subsp. mesenteroides (strain ATCC 8293 / DSM 20343 / BCRC 11652 / CCM 1803 / JCM 6124 / NCDO 523 / NBRC 100496 / NCIMB 8023 / NCTC 12954 / NRRL B-1118 / 37Y).